We begin with the raw amino-acid sequence, 593 residues long: NADH-quinone oxidoreductase subunit C/D (593 aa).

The interval 1 to 184 (MTADNAIFIP…DPYSLTLAKQ (184 aa)) is NADH dehydrogenase I subunit C. An NADH dehydrogenase I subunit D region spans residues 208–593 (DYMFLNLGPN…IDFVMADVDR (386 aa)).

The protein in the N-terminal section; belongs to the complex I 30 kDa subunit family. In the C-terminal section; belongs to the complex I 49 kDa subunit family. NDH-1 is composed of 13 different subunits. Subunits NuoB, CD, E, F, and G constitute the peripheral sector of the complex.

It is found in the cell inner membrane. The enzyme catalyses a quinone + NADH + 5 H(+)(in) = a quinol + NAD(+) + 4 H(+)(out). Functionally, NDH-1 shuttles electrons from NADH, via FMN and iron-sulfur (Fe-S) centers, to quinones in the respiratory chain. The immediate electron acceptor for the enzyme in this species is believed to be ubiquinone. Couples the redox reaction to proton translocation (for every two electrons transferred, four hydrogen ions are translocated across the cytoplasmic membrane), and thus conserves the redox energy in a proton gradient. The chain is NADH-quinone oxidoreductase subunit C/D from Pseudomonas putida (strain GB-1).